Reading from the N-terminus, the 306-residue chain is Elongation factor Ts (306 aa).

The segment at Thr-79–Val-82 is involved in Mg(2+) ion dislocation from EF-Tu.

This sequence belongs to the EF-Ts family.

Its subcellular location is the cytoplasm. Functionally, associates with the EF-Tu.GDP complex and induces the exchange of GDP to GTP. It remains bound to the aminoacyl-tRNA.EF-Tu.GTP complex up to the GTP hydrolysis stage on the ribosome. The sequence is that of Elongation factor Ts from Mesorhizobium japonicum (strain LMG 29417 / CECT 9101 / MAFF 303099) (Mesorhizobium loti (strain MAFF 303099)).